The primary structure comprises 206 residues: dITP/XTP pyrophosphatase (206 aa).

10–15 (SGNAGK) is a substrate binding site. E40 and D69 together coordinate Mg(2+). D69 (proton acceptor) is an active-site residue. Substrate contacts are provided by residues S70, 148–151 (FGYD), K171, and 176–177 (HR).

This sequence belongs to the HAM1 NTPase family. Homodimer. The cofactor is Mg(2+).

It carries out the reaction XTP + H2O = XMP + diphosphate + H(+). It catalyses the reaction dITP + H2O = dIMP + diphosphate + H(+). The catalysed reaction is ITP + H2O = IMP + diphosphate + H(+). Its function is as follows. Pyrophosphatase that catalyzes the hydrolysis of nucleoside triphosphates to their monophosphate derivatives, with a high preference for the non-canonical purine nucleotides XTP (xanthosine triphosphate), dITP (deoxyinosine triphosphate) and ITP. Seems to function as a house-cleaning enzyme that removes non-canonical purine nucleotides from the nucleotide pool, thus preventing their incorporation into DNA/RNA and avoiding chromosomal lesions. The sequence is that of dITP/XTP pyrophosphatase from Synechococcus sp. (strain CC9311).